The following is a 74-amino-acid chain: Anionic peptide clone 10 (74 aa).

The signal sequence occupies residues 1–24 (MVSKSLIVLLLVSVLVSTFFTTEA).

Belongs to the non-disulfide-bridged peptide (NDBP) superfamily. Long chain multifunctional peptide (group 2) family. In terms of tissue distribution, expressed by the venom gland.

The protein localises to the secreted. May be an antimicrobial peptide. The sequence is that of Anionic peptide clone 10 from Tityus costatus (Brazilian scorpion).